A 380-amino-acid polypeptide reads, in one-letter code: Cytochrome b (380 aa).

A run of 4 helical transmembrane segments spans residues 34–54 (FGSL…LLAM), 78–99 (WLIR…YLHI), 114–134 (WNTG…GYVL), and 179–199 (FFAL…IHLT). The heme b site is built by His84 and His98. Heme b-binding residues include His183 and His197. His202 serves as a coordination point for a ubiquinone. 4 consecutive transmembrane segments (helical) span residues 227–247 (TKDL…ALFS), 289–309 (LGGV…PFLH), 321–341 (LSQI…WVGS), and 348–368 (FIII…ILFP).

It belongs to the cytochrome b family. In terms of assembly, the cytochrome bc1 complex contains 11 subunits: 3 respiratory subunits (MT-CYB, CYC1 and UQCRFS1), 2 core proteins (UQCRC1 and UQCRC2) and 6 low-molecular weight proteins (UQCRH/QCR6, UQCRB/QCR7, UQCRQ/QCR8, UQCR10/QCR9, UQCR11/QCR10 and a cleavage product of UQCRFS1). This cytochrome bc1 complex then forms a dimer. Heme b serves as cofactor.

It is found in the mitochondrion inner membrane. In terms of biological role, component of the ubiquinol-cytochrome c reductase complex (complex III or cytochrome b-c1 complex) that is part of the mitochondrial respiratory chain. The b-c1 complex mediates electron transfer from ubiquinol to cytochrome c. Contributes to the generation of a proton gradient across the mitochondrial membrane that is then used for ATP synthesis. The protein is Cytochrome b (MT-CYB) of Aerodramus vulcanorum (Volcano swiftlet).